Consider the following 155-residue polypeptide: Ribosome maturation factor RimP (155 aa).

The protein belongs to the RimP family.

The protein localises to the cytoplasm. Its function is as follows. Required for maturation of 30S ribosomal subunits. The chain is Ribosome maturation factor RimP from Gemmatimonas aurantiaca (strain DSM 14586 / JCM 11422 / NBRC 100505 / T-27).